Here is a 187-residue protein sequence, read N- to C-terminus: Elongation factor P (187 aa).

Belongs to the elongation factor P family.

Its subcellular location is the cytoplasm. The protein operates within protein biosynthesis; polypeptide chain elongation. Functionally, involved in peptide bond synthesis. Stimulates efficient translation and peptide-bond synthesis on native or reconstituted 70S ribosomes in vitro. Probably functions indirectly by altering the affinity of the ribosome for aminoacyl-tRNA, thus increasing their reactivity as acceptors for peptidyl transferase. The chain is Elongation factor P from Syntrophus aciditrophicus (strain SB).